Reading from the N-terminus, the 90-residue chain is Small ribosomal subunit protein uS15 (90 aa).

The protein belongs to the universal ribosomal protein uS15 family. As to quaternary structure, part of the 30S ribosomal subunit. Forms a bridge to the 50S subunit in the 70S ribosome, contacting the 23S rRNA.

One of the primary rRNA binding proteins, it binds directly to 16S rRNA where it helps nucleate assembly of the platform of the 30S subunit by binding and bridging several RNA helices of the 16S rRNA. In terms of biological role, forms an intersubunit bridge (bridge B4) with the 23S rRNA of the 50S subunit in the ribosome. This is Small ribosomal subunit protein uS15 from Wolbachia pipientis subsp. Culex pipiens (strain wPip).